The following is a 505-amino-acid chain: MAALIQTIHGGVVVTRTLTLVYPSTFTSRHKALNQMTSSSNSGLRRFLFTPPQRLSQGICYWGAELSNNVSWTYKTKMVVRSKAGAVPLMKHGDRFLSSLSSPALAGDPSAINRHIKKFVAASPKSVALNVLSHLLSDQTSHPHLSFFALSLYSEITEASWFDWNPKLIAELIALLNKQERFDESETLLSTAVSRLKSNERDFTLFLCNLVESNSKQGSIQGFSEASFRLREIIQRSSSVYVKTQAYKSMVSGLCNMDQPHDAERVIEEMRMEKIKPGLFEYKSVLYGYGRLGLFDDMNRVVHRMGTEGHKIDTVCSNMVLSSYGAHDALPQMGSWLQKLKGFNVPFSIRTYNSVLNSCPTIISMLKDLDSCPVSLSELRTFLNEDEALLVHELTQSSVLDEAIEWNAVEGKLDLHGMHLSSSYLILLQWMDETRLRFSEEKCVIPAEIVVVSGSGKHSNVRGESPVKALVKKIMVRTGSPMRIDRKNVGSFIAKGKTVKEWLCK.

PPR repeat units lie at residues 243-277 (KTQAYKSMVSGLCNMDQPHDAERVIEEMRMEKIKP), 278-312 (GLFEYKSVLYGYGRLGLFDDMNRVVHRMGTEGHKI), and 313-347 (DTVCSNMVLSSYGAHDALPQMGSWLQKLKGFNVPF). A Smr domain is found at 413–503 (LDLHGMHLSS…AKGKTVKEWL (91 aa)).

Belongs to the PPR family. P subfamily.

This chain is Pentatricopeptide repeat-containing protein At2g17033, found in Arabidopsis thaliana (Mouse-ear cress).